The sequence spans 84 residues: ATP synthase subunit c (84 aa).

2 consecutive transmembrane segments (helical) span residues A21–I38 and M60–L80.

It belongs to the ATPase C chain family. As to quaternary structure, F-type ATPases have 2 components, F(1) - the catalytic core - and F(0) - the membrane proton channel. F(1) has five subunits: alpha(3), beta(3), gamma(1), delta(1), epsilon(1). F(0) has three main subunits: a(1), b(2) and c(10-14). The alpha and beta chains form an alternating ring which encloses part of the gamma chain. F(1) is attached to F(0) by a central stalk formed by the gamma and epsilon chains, while a peripheral stalk is formed by the delta and b chains.

The protein resides in the cell inner membrane. Its function is as follows. F(1)F(0) ATP synthase produces ATP from ADP in the presence of a proton or sodium gradient. F-type ATPases consist of two structural domains, F(1) containing the extramembraneous catalytic core and F(0) containing the membrane proton channel, linked together by a central stalk and a peripheral stalk. During catalysis, ATP synthesis in the catalytic domain of F(1) is coupled via a rotary mechanism of the central stalk subunits to proton translocation. In terms of biological role, key component of the F(0) channel; it plays a direct role in translocation across the membrane. A homomeric c-ring of between 10-14 subunits forms the central stalk rotor element with the F(1) delta and epsilon subunits. This is ATP synthase subunit c from Phocaeicola vulgatus (strain ATCC 8482 / DSM 1447 / JCM 5826 / CCUG 4940 / NBRC 14291 / NCTC 11154) (Bacteroides vulgatus).